Reading from the N-terminus, the 603-residue chain is DNA mismatch repair protein MutL (603 aa).

It belongs to the DNA mismatch repair MutL/HexB family.

Its function is as follows. This protein is involved in the repair of mismatches in DNA. It is required for dam-dependent methyl-directed DNA mismatch repair. May act as a 'molecular matchmaker', a protein that promotes the formation of a stable complex between two or more DNA-binding proteins in an ATP-dependent manner without itself being part of a final effector complex. In Rhodopseudomonas palustris (strain BisA53), this protein is DNA mismatch repair protein MutL.